The following is a 387-amino-acid chain: Thermostable celloxylanase (387 aa).

Positions 41-382 (AEDIPSLAEA…KPAFWAIVDP (342 aa)) constitute a GH10 domain. Residue Glu185 is the Proton donor of the active site. Glu293 serves as the catalytic Nucleophile.

It belongs to the glycosyl hydrolase 10 (cellulase F) family.

The enzyme catalyses Endohydrolysis of (1-&gt;4)-beta-D-glucosidic linkages in cellulose, lichenin and cereal beta-D-glucans.. The catalysed reaction is Endohydrolysis of (1-&gt;4)-beta-D-xylosidic linkages in xylans.. Its pathway is glycan degradation; xylan degradation. Its function is as follows. Active toward xylan, carboxymethylcellulose, P-nitrophenyl-beta-D-xylopyranoside and P-nitrophenyl-beta-D-cellobioside. In Thermoclostridium stercorarium (Clostridium stercorarium), this protein is Thermostable celloxylanase (xynB).